The following is a 629-amino-acid chain: UvrABC system protein C (629 aa).

One can recognise a GIY-YIG domain in the interval Thr26 to Val105. Positions Ser219–Tyr254 constitute a UVR domain.

This sequence belongs to the UvrC family. Interacts with UvrB in an incision complex.

The protein localises to the cytoplasm. Its function is as follows. The UvrABC repair system catalyzes the recognition and processing of DNA lesions. UvrC both incises the 5' and 3' sides of the lesion. The N-terminal half is responsible for the 3' incision and the C-terminal half is responsible for the 5' incision. This Chlorobium chlorochromatii (strain CaD3) protein is UvrABC system protein C.